The primary structure comprises 413 residues: ORC1-type DNA replication protein 10 (413 aa).

ATP contacts are provided by residues 63–67 (VGKTA), tyrosine 211, and arginine 223.

This sequence belongs to the CDC6/cdc18 family.

Functionally, involved in regulation of DNA replication. This chain is ORC1-type DNA replication protein 10 (orc10), found in Halobacterium salinarum (strain ATCC 700922 / JCM 11081 / NRC-1) (Halobacterium halobium).